Reading from the N-terminus, the 363-residue chain is Aminomethyltransferase (363 aa).

This sequence belongs to the GcvT family. As to quaternary structure, the glycine cleavage system is composed of four proteins: P, T, L and H.

It carries out the reaction N(6)-[(R)-S(8)-aminomethyldihydrolipoyl]-L-lysyl-[protein] + (6S)-5,6,7,8-tetrahydrofolate = N(6)-[(R)-dihydrolipoyl]-L-lysyl-[protein] + (6R)-5,10-methylene-5,6,7,8-tetrahydrofolate + NH4(+). In terms of biological role, the glycine cleavage system catalyzes the degradation of glycine. The protein is Aminomethyltransferase of Staphylococcus haemolyticus (strain JCSC1435).